A 339-amino-acid polypeptide reads, in one-letter code: DNA repair protein RAD51 homolog 1 (339 aa).

Residues Met1 to Pro22 are disordered. At Ala2 the chain carries N-acetylalanine. Thr13 carries the phosphothreonine modification. Position 14 is a phosphoserine (Ser14). The HhH domain occupies Thr48–Glu77. At Tyr54 the chain carries Phosphotyrosine; by ABL1. Glycyl lysine isopeptide (Lys-Gly) (interchain with G-Cter in ubiquitin) cross-links involve residues Lys58 and Lys64. Gly127–Thr134 is a binding site for ATP. The interaction with PALB2 stretch occupies residues Asp184–Asp257. A Nuclear export signal; masked by the interaction with BRCA2 motif is present at residues Leu245–Gly260. Thr309 is subject to Phosphothreonine; by CHEK1.

The protein belongs to the RecA family. RAD51 subfamily. Forms linear homooligomers, giving rise to a RAD51 nucleoprotein filament, which is essential for strand-pairing reactions during DNA recombination. Interacts with BRCA1 and either directly or indirectly with p53. Interacts with XRCC3, RAD54L and RAD54B. Interacts with the BCDX2 subcomplex RAD51C:RAD51B. Component of the homologous recombination repair (HR) complex composed of ERCC5/XPG, BRCA2, PALB2, DSS1 and RAD51. Interacts directly with PALB2 which may serve as a scaffold for a HR complex containing PALB2, BRCA2, RAD51C, RAD51 and XRCC3. Interacts with RAD51AP1 and RAD51AP2. Interacts with CHEK1, and this may require prior phosphorylation of CHEK1. Interacts with the MND1-PSMC3IP heterodimer. Found in a complex, at least composed of BLM, RAD51 and SPIDR; the complex formation is mediated by SPIDR. Interacts with SPIDR; the interaction is direct and recruits RAD51 to DNA damage sites. Interacts with FIGNL1 (via N-terminal one-half region); the interaction is direct. Interacts with RAD51AP1 (via C-terminal region); the interaction is direct. Interacts with NABP2, RPA1, PALB2 and RAD51. Interacts with SWI5/C9orf119, and at lower level with SFR1/MEIR5. Interacts with hyperphosphorylated RPA2; this interaction is necessary for efficient recruitment to chromatin in response to DNA damage. Interacts with SWSAP1; involved in homologous recombination repair. Interacts with PARPBP, BRCA2 and RECQL5; these interactions interfere with the formation of the RAD51-DNA homologous recombination structure. Interacts with POLQ; POLQ acts as an inhibitor of homology-recombination repair (HR) pathway by limiting RAD51 accumulation at resected ends. Interacts with POLN. Interacts with FBH1. Interacts with RFWD3. Interacts with the MCM8-MCM9 complex; the interaction recruits RAD51 to DNA damage sites. Component of a multiprotein complex with MEIOB and SPATA22. Interacts with the complex BRME1:HSF2BP:BRCA2. Interacts with HELQ; stimulating HELQ DNA helicase activity and ability to unwing DNA. Interacts with MMS22L; the interaction is direct and promotes recruitment of RAD51 to sites of DNA damage. Interacts with the ATAD5 RFC-like complex. Within the ATAD5 RFC-like complex, interacts with ATAD5 (via N-terminus); the interaction is direct and enhanced under replication stress. Interacts with WDR48; the interaction is enhanced under replication stress. Interacts with DNA helicase ZGRF1; the interaction promotes RAD51 strand exchange activity. Interacts (when phosphorylated) with TOPBP1; interaction takes place following phosphorylation by CK2 and PLK1 and promotes recruitment to DNA damage sites. Interacts with GRB2; this interaction inhibits RAD51 ATPase activity to stabilize RAD51 on stalled replication forks. Ubiquitinated by the SCF(FBH1) E3 ubiquitin ligase complex, regulating RAD51 subcellular location and preventing its association with DNA. Ubiquitinated by RFWD3 in response to DNA damage: ubiquitination leads to degradation by the proteasome, promoting homologous recombination. Post-translationally, phosphorylation of Thr-309 by CHEK1 may enhance association with chromatin at sites of DNA damage and promote DNA repair by homologous recombination. Phosphorylated at Ser-14 by PLK1, triggering phosphorylation at Thr-13 by CK2, thereby promoting interaction with TOPBP1 and recruitment to DNA damage sites during S-phase. Phosphorylation by ABL1 inhibits function. As to expression, expressed in the testes (at protein level). Expressed in the brain (at protein level). Expressed in the thymus, spleen, ovary and small intestine.

The protein localises to the nucleus. It is found in the cytoplasm. The protein resides in the perinuclear region. Its subcellular location is the mitochondrion matrix. It localises to the chromosome. The protein localises to the cytoskeleton. It is found in the microtubule organizing center. The protein resides in the centrosome. Functionally, plays an important role in homologous strand exchange, a key step in DNA repair through homologous recombination (HR). Binds to single-stranded DNA in an ATP-dependent manner to form nucleoprotein filaments which are essential for the homology search and strand exchange. Catalyzes the recognition of homology and strand exchange between homologous DNA partners to form a joint molecule between a processed DNA break and the repair template. Recruited to resolve stalled replication forks during replication stress. Part of a PALB2-scaffolded HR complex containing BRCA2 and RAD51C and which is thought to play a role in DNA repair by HR. Plays a role in regulating mitochondrial DNA copy number under conditions of oxidative stress in the presence of RAD51C and XRCC3. Also involved in interstrand cross-link repair. The sequence is that of DNA repair protein RAD51 homolog 1 from Mus musculus (Mouse).